The chain runs to 198 residues: 3-isopropylmalate dehydratase small subunit (198 aa).

Belongs to the LeuD family. LeuD type 1 subfamily. Heterodimer of LeuC and LeuD.

The catalysed reaction is (2R,3S)-3-isopropylmalate = (2S)-2-isopropylmalate. Its pathway is amino-acid biosynthesis; L-leucine biosynthesis; L-leucine from 3-methyl-2-oxobutanoate: step 2/4. Its function is as follows. Catalyzes the isomerization between 2-isopropylmalate and 3-isopropylmalate, via the formation of 2-isopropylmaleate. In Colwellia psychrerythraea (strain 34H / ATCC BAA-681) (Vibrio psychroerythus), this protein is 3-isopropylmalate dehydratase small subunit.